The sequence spans 457 residues: Casein kinase 1-like protein 11 (457 aa).

The region spanning 15 to 284 (FKLGRKLGSG…LRRLFRDLFI (270 aa)) is the Protein kinase domain. ATP is bound by residues 21 to 29 (LGSGSFGEL) and Lys-44. The Proton acceptor role is filled by Asp-134. 2 disordered regions span residues 305 to 337 (GSSS…GQDL) and 352 to 442 (NVSS…EDAI). Residues 311–324 (RPTPRPALDPPGPP) are compositionally biased toward pro residues. 2 stretches are compositionally biased toward polar residues: residues 383–403 (NGST…SAEP) and 409–429 (SRLF…QSYE).

This sequence belongs to the protein kinase superfamily. CK1 Ser/Thr protein kinase family. Casein kinase I subfamily. In terms of assembly, monomer. Autophosphorylated.

It localises to the cytoplasm. The protein localises to the nucleus. It catalyses the reaction L-seryl-[protein] + ATP = O-phospho-L-seryl-[protein] + ADP + H(+). The catalysed reaction is L-threonyl-[protein] + ATP = O-phospho-L-threonyl-[protein] + ADP + H(+). Its activity is regulated as follows. Partially inhibited by N-(2-aminoethyl)-5-chloroisoquinoline-8-sulfonamide (CKI-7). Its function is as follows. Casein kinases are operationally defined by their preferential utilization of acidic proteins such as caseins as substrates. Can phosphorylate casein, phosvitin, myosin light chains and poly(Glu,Tyr) in vitro. In Arabidopsis thaliana (Mouse-ear cress), this protein is Casein kinase 1-like protein 11.